The chain runs to 315 residues: Olfactory receptor 3A1 (315 aa).

Residues 1 to 28 (MQPESGANGTVIAEFILLGLLEAPGLQP) lie on the Extracellular side of the membrane. An N-linked (GlcNAc...) asparagine glycan is attached at asparagine 8. Residues 29-52 (VVFVLFLFAYLVTVGGNLSILAAV) traverse the membrane as a helical segment. At 53–60 (LVEPKLHS) the chain is on the cytoplasmic side. Residues 61–82 (PMYFFLGNLSVLDVGCISVTVP) traverse the membrane as a helical segment. Residues 83-103 (SMLSRLLSRKRAVPCGACLTQ) are Extracellular-facing. A disulfide bond links cysteine 100 and cysteine 192. The helical transmembrane segment at 104–123 (LFFFHLFVGVDCFLLTAMAY) threads the bilayer. The Cytoplasmic portion of the chain corresponds to 124-143 (DRFLAICRPLTYSTRMSQTV). The helical transmembrane segment at 144–161 (QRMLVAASWACAFTNALT) threads the bilayer. Over 162–199 (HTVAMSTLNFCGPNEVNHFYCDLPQLFQLSCSSTQLNE) the chain is Extracellular. The chain crosses the membrane as a helical span at residues 200–223 (LLLFAVGFIMAGTPMALIVISYIH). The Cytoplasmic portion of the chain corresponds to 224–240 (VAAAVLRIRSVEGRKKA). A helical membrane pass occupies residues 241 to 264 (FSTCGSHLTVVAMFYGSGIFNYMR). The Extracellular segment spans residues 265 to 275 (LGSTKLSDKDK). The helical transmembrane segment at 276-295 (AVGIFNTVINPMVNPIIYRF) threads the bilayer. Over 296–315 (RNPEVQSAIWRMLTGRRSLA) the chain is Cytoplasmic.

The protein belongs to the G-protein coupled receptor 1 family.

The protein localises to the cell membrane. Functionally, odorant receptor. The sequence is that of Olfactory receptor 3A1 (OR3A1) from Pan troglodytes (Chimpanzee).